Consider the following 469-residue polypeptide: Sorting and assembly machinery component 50 homolog (469 aa).

Residues 45-125 (VVVQHVHFDG…LDVTFEVTEL (81 aa)) form the POTRA domain. K255 carries the post-translational modification N6-methyllysine.

It belongs to the SAM50/omp85 family. As to quaternary structure, associates with the mitochondrial contact site and cristae organizing system (MICOS) complex, composed of at least MICOS10/MIC10, CHCHD3/MIC19, CHCHD6/MIC25, APOOL/MIC27, IMMT/MIC60, APOO/MIC23/MIC26 and QIL1/MIC13. This complex was also known under the names MINOS or MitOS complex. The MICOS complex associates with mitochondrial outer membrane proteins SAMM50, MTX1 and MTX2 (together described as components of the mitochondrial outer membrane sorting assembly machinery (SAM) complex) and DNAJC11, mitochondrial inner membrane protein TMEM11 and with HSPA9. The MICOS and SAM complexes together with DNAJC11 are part of a large protein complex spanning both membranes termed the mitochondrial intermembrane space bridging (MIB) complex. Interacts with IMMT/MIC60. Interacts with CHCHD3/MIC19. Interacts with ARMC1.

It localises to the mitochondrion outer membrane. The protein localises to the cytoplasm. Its subcellular location is the mitochondrion. In terms of biological role, plays a crucial role in the maintenance of the structure of mitochondrial cristae and the proper assembly of the mitochondrial respiratory chain complexes. Required for the assembly of TOMM40 into the TOM complex. The polypeptide is Sorting and assembly machinery component 50 homolog (SAMM50) (Bos taurus (Bovine)).